A 395-amino-acid chain; its full sequence is Putative 8-amino-7-oxononanoate synthase (395 aa).

Arg-23 serves as a coordination point for substrate. Pyridoxal 5'-phosphate is bound at residue 110–111 (GY). His-135 is a substrate binding site. Pyridoxal 5'-phosphate contacts are provided by residues Ser-181, 206 to 209 (DEAH), and 237 to 240 (TFSK). Lys-240 carries the N6-(pyridoxal phosphate)lysine modification. Residue Thr-354 coordinates substrate.

This sequence belongs to the class-II pyridoxal-phosphate-dependent aminotransferase family. BioF subfamily. In terms of assembly, homodimer. Requires pyridoxal 5'-phosphate as cofactor.

It carries out the reaction 6-carboxyhexanoyl-[ACP] + L-alanine + H(+) = (8S)-8-amino-7-oxononanoate + holo-[ACP] + CO2. It functions in the pathway cofactor biosynthesis; biotin biosynthesis. Its function is as follows. Catalyzes the decarboxylative condensation of pimeloyl-[acyl-carrier protein] and L-alanine to produce 8-amino-7-oxononanoate (AON), [acyl-carrier protein], and carbon dioxide. The chain is Putative 8-amino-7-oxononanoate synthase (bioF) from Halalkalibacterium halodurans (strain ATCC BAA-125 / DSM 18197 / FERM 7344 / JCM 9153 / C-125) (Bacillus halodurans).